The sequence spans 542 residues: CTP synthase (542 aa).

Positions 1-265 (MARYVFITGG…DSEVLAAFGI (265 aa)) are amidoligase domain. Residue Ser13 participates in CTP binding. Position 13 (Ser13) interacts with UTP. ATP is bound by residues 14-19 (SLGKGI) and Asp71. Mg(2+) is bound by residues Asp71 and Glu139. Residues 146–148 (DIE), 186–191 (KTKPTQ), and Lys222 each bind CTP. Residues 186 to 191 (KTKPTQ) and Lys222 each bind UTP. In terms of domain architecture, Glutamine amidotransferase type-1 spans 291-541 (TIAIVGKYTG…VEAAVEQSRL (251 aa)). Position 353 (Gly353) interacts with L-glutamine. The Nucleophile; for glutamine hydrolysis role is filled by Cys380. L-glutamine-binding positions include 381 to 384 (FGMQ), Glu404, and Arg469. Catalysis depends on residues His514 and Glu516.

The protein belongs to the CTP synthase family. In terms of assembly, homotetramer.

The catalysed reaction is UTP + L-glutamine + ATP + H2O = CTP + L-glutamate + ADP + phosphate + 2 H(+). It carries out the reaction L-glutamine + H2O = L-glutamate + NH4(+). It catalyses the reaction UTP + NH4(+) + ATP = CTP + ADP + phosphate + 2 H(+). Its pathway is pyrimidine metabolism; CTP biosynthesis via de novo pathway; CTP from UDP: step 2/2. Its activity is regulated as follows. Allosterically activated by GTP, when glutamine is the substrate; GTP has no effect on the reaction when ammonia is the substrate. The allosteric effector GTP functions by stabilizing the protein conformation that binds the tetrahedral intermediate(s) formed during glutamine hydrolysis. Inhibited by the product CTP, via allosteric rather than competitive inhibition. Functionally, catalyzes the ATP-dependent amination of UTP to CTP with either L-glutamine or ammonia as the source of nitrogen. Regulates intracellular CTP levels through interactions with the four ribonucleotide triphosphates. The sequence is that of CTP synthase from Agrobacterium fabrum (strain C58 / ATCC 33970) (Agrobacterium tumefaciens (strain C58)).